Consider the following 118-residue polypeptide: UPF0295 protein BC_0520 (118 aa).

2 consecutive transmembrane segments (helical) span residues 12 to 32 (IRTFALSLVFIGLFIAYLGVF) and 43 to 63 (FMMVGFLAVIASTVVYFWIGM).

This sequence belongs to the UPF0295 family.

The protein localises to the cell membrane. The protein is UPF0295 protein BC_0520 of Bacillus cereus (strain ATCC 14579 / DSM 31 / CCUG 7414 / JCM 2152 / NBRC 15305 / NCIMB 9373 / NCTC 2599 / NRRL B-3711).